A 335-amino-acid polypeptide reads, in one-letter code: Nucleoid-associated protein KPN78578_25800 (335 aa).

Belongs to the YejK family.

The protein resides in the cytoplasm. It is found in the nucleoid. This is Nucleoid-associated protein KPN78578_25800 from Klebsiella pneumoniae subsp. pneumoniae (strain ATCC 700721 / MGH 78578).